Consider the following 71-residue polypeptide: Beta-defensin 7 (71 aa).

An N-terminal signal peptide occupies residues 1–22 (MRIHYVLFAFLLVLLSPFAAFS). The residue at position 23 (glutamine 23) is a Pyrrolidone carboxylic acid. Residues 23–25 (QDI) constitute a propeptide that is removed on maturation. 3 disulfides stabilise this stretch: cysteine 31–cysteine 58, cysteine 38–cysteine 52, and cysteine 42–cysteine 59.

It belongs to the beta-defensin family. LAP/TAP subfamily.

The protein resides in the secreted. Its function is as follows. Has bactericidal activity. This Mus musculus (Mouse) protein is Beta-defensin 7 (Defb7).